Here is a 158-residue protein sequence, read N- to C-terminus: Ribosome maturation factor RimP (158 aa).

This sequence belongs to the RimP family.

Its subcellular location is the cytoplasm. Required for maturation of 30S ribosomal subunits. This chain is Ribosome maturation factor RimP, found in Streptococcus suis (strain 05ZYH33).